Consider the following 347-residue polypeptide: L-threonine 3-dehydrogenase (347 aa).

Residue Cys-42 participates in Zn(2+) binding. Residues Thr-44 and His-47 each act as charge relay system in the active site. Residues His-67, Glu-68, Cys-97, Cys-100, Cys-103, and Cys-111 each contribute to the Zn(2+) site. NAD(+) is bound by residues Ile-179, Glu-199, Arg-204, 266–268, and 291–292; these read LGL and IT.

Belongs to the zinc-containing alcohol dehydrogenase family. As to quaternary structure, homotetramer. Requires Zn(2+) as cofactor.

Its subcellular location is the cytoplasm. It catalyses the reaction L-threonine + NAD(+) = (2S)-2-amino-3-oxobutanoate + NADH + H(+). It participates in amino-acid degradation; L-threonine degradation via oxydo-reductase pathway; glycine from L-threonine: step 1/2. Its function is as follows. Catalyzes the NAD(+)-dependent oxidation of L-threonine to 2-amino-3-ketobutyrate. This chain is L-threonine 3-dehydrogenase, found in Caldanaerobacter subterraneus subsp. tengcongensis (strain DSM 15242 / JCM 11007 / NBRC 100824 / MB4) (Thermoanaerobacter tengcongensis).